We begin with the raw amino-acid sequence, 148 residues long: Snaclec B9 (148 aa).

The N-terminal stretch at M1–A24 is a signal peptide. Intrachain disulfides connect C27–C38, C55–C144, and C121–C136. Residues Y34 to K145 enclose the C-type lectin domain. N-linked (GlcNAc...) asparagine glycosylation is found at N57 and N60.

The protein belongs to the snaclec family. Heterodimer; disulfide-linked. As to expression, expressed by the venom gland.

The protein resides in the secreted. Its function is as follows. Interferes with one step of hemostasis (modulation of platelet aggregation, or coagulation cascade, for example). The polypeptide is Snaclec B9 (Macrovipera lebetinus (Levantine viper)).